Here is a 955-residue protein sequence, read N- to C-terminus: Isoleucine--tRNA ligase (955 aa).

The 'HIGH' region motif lies at 58 to 68 (IYANGDIHIGH). An L-isoleucyl-5'-AMP-binding site is contributed by Glu-552. Residues 593–597 (KMSKS) carry the 'KMSKS' region motif. ATP is bound at residue Lys-596. Zn(2+) contacts are provided by Cys-918, Cys-921, Cys-938, and Cys-941.

Belongs to the class-I aminoacyl-tRNA synthetase family. IleS type 1 subfamily. As to quaternary structure, monomer. The cofactor is Zn(2+).

The protein resides in the cytoplasm. The catalysed reaction is tRNA(Ile) + L-isoleucine + ATP = L-isoleucyl-tRNA(Ile) + AMP + diphosphate. Its function is as follows. Catalyzes the attachment of isoleucine to tRNA(Ile). As IleRS can inadvertently accommodate and process structurally similar amino acids such as valine, to avoid such errors it has two additional distinct tRNA(Ile)-dependent editing activities. One activity is designated as 'pretransfer' editing and involves the hydrolysis of activated Val-AMP. The other activity is designated 'posttransfer' editing and involves deacylation of mischarged Val-tRNA(Ile). This is Isoleucine--tRNA ligase from Vesicomyosocius okutanii subsp. Calyptogena okutanii (strain HA).